A 206-amino-acid polypeptide reads, in one-letter code: Protein Mabiki (206 aa).

The interval 54–77 is disordered; that stretch reads FSDQDADFPPLPKRRRLGSSSSSV.

Its function is as follows. Plays a role in inducing apoptosis and is involved in the repair of head patterning defects in the embryo caused by extra maternal copies of the homeotic gene bicoid. This is Protein Mabiki from Drosophila melanogaster (Fruit fly).